Here is a 503-residue protein sequence, read N- to C-terminus: MKNIGWMLRQRATVSPRLQAYVEPSTDVRMTYAQMNALANRCADVLTALGIAKGDRVALLMPNSVEFCCLFYGAAKLGAVAVPINTRLAAPEVSFILSDSGSKVVIYGAPSAPVIDAIRAQADPPGTVTDWIGADSLAERLRSAAADEPAVECGGDDNLFIMYTSGTTGHPKGVVHTHESVHSAASSWASTIDVRYRDRLLLPLPMFHVAALTTVIFSAMRGVTLISMPQFDATKVWSLIVEERVCIGGAVPAILNFMRQVPEFAELDAPDFRYFITGGAPMPEALIKIYAAKNIEVVQGYALTESCGGGTLLLSEDALRKAGSAGRATMFTDVAVRGDDGVIREHGEGEVVIKSDILLKEYWNRPEATRDAFDNGWFRTGDIGEIDDEGYLYIKDRLKDMIISGGENVYPAEIESVIIGVPGVSEVAVIGLPDEKWGEIAAAIVVADQNEVSEQQIVEYCGTRLARYKLPKKVIFAEAIPRNPTGKILKTVLREQYSATVPK.

This sequence belongs to the ATP-dependent AMP-binding enzyme family. As to quaternary structure, homodimer.

Its subcellular location is the cell membrane. The enzyme catalyses a long-chain fatty acid + ATP + CoA = a long-chain fatty acyl-CoA + AMP + diphosphate. It functions in the pathway lipid metabolism; fatty acid biosynthesis. Its function is as follows. Required for maintaining the appropriate mycolic acid composition and permeability of the envelope on its exposure to acidic pH. Catalyzes the activation of long-chain fatty acids as acyl-coenzyme A (acyl-CoA), which are then transferred to the multifunctional polyketide synthase (PKS) type III for further chain extension. The polypeptide is Long-chain-fatty-acid--CoA ligase FadD13 (fadD13) (Mycobacterium tuberculosis (strain CDC 1551 / Oshkosh)).